A 409-amino-acid chain; its full sequence is Forkhead box protein A2 (409 aa).

Residues 150-241 (AKPPYSYISL…GNMFENGCYL (92 aa)) constitute a DNA-binding region (fork-head). The span at 250–262 (DKKLSKDPSRKTS) shows a compositional bias: basic and acidic residues. The segment at 250-315 (DKKLSKDPSR…AASPTSQAQH (66 aa)) is disordered. The segment covering 263–286 (EGGSNSSSESCNGNESPHSNSSSN) has biased composition (low complexity).

Its subcellular location is the nucleus. May play a crucial role in specification of both the axial mesendoderm and the ventral nervous system. This is Forkhead box protein A2 (foxa2) from Danio rerio (Zebrafish).